The primary structure comprises 650 residues: MQETQDQLEQMKTMISKPAGRKDYSLMQEESVPSTPSGSTVGSLITAVGQNEHNKVRNDEEATSSASPDGTPSTVDEGDVEESNSDISGVNEQNFENELETSLAEGKSWHSAQDLNKSHTEEPIDDPNEDKMSEINLEPSNKGIEKNATVTEKSATILAKELSATTDVKKKCLRAAKPNELPAEEYCNEDLKGAISGLERRTSKPDLETNEIQDAKSLESGIGSSGNVNEVPKQNAKHPMDSCQNLEQSAGTTSAEKEAIRALESQSSGTSQASLAKHKSETNTSIQSSTQETAQAPTVYEELGSEAERSKSHAQAYKNQTDEKEMSGEIIKENPENAIDDASSPSKEYDTPSFAGKPEEGSENLKAPAKDGEPVDSEKKKKNGGTPIEGRPLQSLEGDAPQVPQRPNKRPPPKKPSSKIAAFQAMLKQQQLMDASKTKDKQIDSGNSLLSGKRANITNNLNGIFGLPGMAPGMTPGMVPPQRPPARQQTGSDGGSQSSENQTSSQSAAPSGPQRRARGPKGRKLPAHIANVEKVETSIKTNEIQVLKTWSLKFQKISPTCSEKDSEPLKDIPESGVVSPSNPKSMSELNGVPVESDVICERETDILQNSKNEMNDLEDTNEDNVKEPRQFSIPTHFDLGESDANQEESS.

4 stretches are compositionally biased toward polar residues: residues 1 to 10 (MQETQDQLEQ), 31 to 51 (SVPS…VGQN), 63 to 74 (TSSASPDGTPST), and 85 to 96 (SDISGVNEQNFE). Disordered stretches follow at residues 1 to 148 (MQET…EKNA), 197 to 529 (GLER…PAHI), and 559 to 650 (PTCS…EESS). Positions 198-217 (LERRTSKPDLETNEIQDAKS) are enriched in basic and acidic residues. Composition is skewed to polar residues over residues 242–254 (SCQN…GTTS), 264–274 (ESQSSGTSQAS), and 282–296 (TNTS…TAQA). Composition is skewed to basic and acidic residues over residues 320–335 (QTDE…KENP) and 368–379 (PAKDGEPVDSEK). A compositionally biased stretch (basic residues) spans 407 to 417 (PNKRPPPKKPS). Positions 444 to 462 (DSGNSLLSGKRANITNNLN) are enriched in polar residues. The segment covering 488 to 507 (QQTGSDGGSQSSENQTSSQS) has biased composition (low complexity). Basic residues predominate over residues 515 to 526 (RRARGPKGRKLP). A compositionally biased stretch (basic and acidic residues) spans 562 to 573 (SEKDSEPLKDIP). The segment covering 578 to 588 (VSPSNPKSMSE) has biased composition (polar residues). Acidic residues predominate over residues 640–650 (GESDANQEESS).

Belongs to the AIM21 family.

The protein resides in the cytoplasm. It is found in the cytoskeleton. Its subcellular location is the actin patch. Its function is as follows. Involved in mitochondrial migration along actin filaments. This chain is Altered inheritance of mitochondria protein 21 (AIM21), found in Lachancea thermotolerans (strain ATCC 56472 / CBS 6340 / NRRL Y-8284) (Yeast).